The following is a 453-amino-acid chain: MTTDTIVAQATAPGRGGVGIIRVSGPKANQVALEVTGKTLKPRYAEYLPFQAEDGTVLDQGIALYFPNPHSFTGEDVLELQGHGGPVVMDMLIKRILGIAGVRAARPGEFSERAFLNDKMDLTQAEAIADLIDASSEEAAKSALQSLQGQFSQRIQTLVESLIHLRIYVEAAIDFPEEEIDFLADGKVAGDLQAIIDNLDAVRKEANQGAIMREGMKVVIAGRPNAGKSSLLNALSGKESAIVTDIAGTTRDVLREHIHIDGMPLHIIDTAGLRDASDEVEKIGIERAWDEIAQADRVLFMVDGTTTDATDPKEIWPDFVDRLPESIGMTVIRNKADQTGEDMGICHVNDPTLIRLSAKTGAGVDALRNHLKECMGFSGNTEGGFMARRRHLDALERAAQHLQIGQEQLEGYMAGEILAEELRITQQHLNEITGEFSSDDLLGRIFSSFCIGK.

Residues Arg22, Glu79, and Lys119 each contribute to the (6S)-5-formyl-5,6,7,8-tetrahydrofolate site. Residues 215–376 (GMKVVIAGRP…LRNHLKECMG (162 aa)) enclose the TrmE-type G domain. Asn225 serves as a coordination point for K(+). Residues 225–230 (NAGKSS), 244–250 (TDIAGTT), 269–272 (DTAG), and 334–337 (NKAD) each bind GTP. Ser229 provides a ligand contact to Mg(2+). The K(+) site is built by Thr244, Ile246, and Thr249. Thr250 is a binding site for Mg(2+). Residue Lys453 coordinates (6S)-5-formyl-5,6,7,8-tetrahydrofolate.

This sequence belongs to the TRAFAC class TrmE-Era-EngA-EngB-Septin-like GTPase superfamily. TrmE GTPase family. As to quaternary structure, homodimer. Heterotetramer of two MnmE and two MnmG subunits. Requires K(+) as cofactor.

The protein resides in the cytoplasm. In terms of biological role, exhibits a very high intrinsic GTPase hydrolysis rate. Involved in the addition of a carboxymethylaminomethyl (cmnm) group at the wobble position (U34) of certain tRNAs, forming tRNA-cmnm(5)s(2)U34. The polypeptide is tRNA modification GTPase MnmE (Vibrio parahaemolyticus serotype O3:K6 (strain RIMD 2210633)).